A 507-amino-acid polypeptide reads, in one-letter code: Alkyl hydroperoxide reductase subunit F (507 aa).

Position 207-222 (207-222) interacts with FAD; it reads DVLIVGGGPASGSAAI. Cysteines 335 and 338 form a disulfide. NAD(+) is bound at residue 347 to 361; that stretch reads DVAVIGGGNSGVEAA. Position 467–477 (467–477) interacts with FAD; it reads TNVPGIFAAGD.

This sequence belongs to the class-II pyridine nucleotide-disulfide oxidoreductase family. Homodimer. The cofactor is FAD.

Functionally, serves to protect the cell against DNA damage by alkyl hydroperoxides. It can use either NADH or NADPH as electron donor for direct reduction of redox dyes or of alkyl hydroperoxides when combined with the AhpC protein. The sequence is that of Alkyl hydroperoxide reductase subunit F (ahpF) from Staphylococcus aureus (strain MRSA252).